The sequence spans 183 residues: NADH-quinone oxidoreductase subunit A (183 aa).

3 helical membrane-spanning segments follow: residues 11-31 (IIAF…VPLL), 63-83 (FYLV…LYAW), and 98-118 (MVIF…TGAL). A disordered region spans residues 160–183 (GHIPAQSSGRMKSKTSTAPSSKQE). The span at 164–183 (AQSSGRMKSKTSTAPSSKQE) shows a compositional bias: polar residues.

This sequence belongs to the complex I subunit 3 family. NDH-1 is composed of 14 different subunits. Subunits NuoA, H, J, K, L, M, N constitute the membrane sector of the complex.

Its subcellular location is the cell inner membrane. The catalysed reaction is a quinone + NADH + 5 H(+)(in) = a quinol + NAD(+) + 4 H(+)(out). In terms of biological role, NDH-1 shuttles electrons from NADH, via FMN and iron-sulfur (Fe-S) centers, to quinones in the respiratory chain. The immediate electron acceptor for the enzyme in this species is believed to be ubiquinone. Couples the redox reaction to proton translocation (for every two electrons transferred, four hydrogen ions are translocated across the cytoplasmic membrane), and thus conserves the redox energy in a proton gradient. This chain is NADH-quinone oxidoreductase subunit A, found in Acinetobacter baylyi (strain ATCC 33305 / BD413 / ADP1).